A 593-amino-acid polypeptide reads, in one-letter code: Arginine--tRNA ligase (593 aa).

The 'HIGH' region motif lies at 138–148; it reads ANPTGPLHVGH.

This sequence belongs to the class-I aminoacyl-tRNA synthetase family. As to quaternary structure, monomer.

Its subcellular location is the cytoplasm. It carries out the reaction tRNA(Arg) + L-arginine + ATP = L-arginyl-tRNA(Arg) + AMP + diphosphate. This chain is Arginine--tRNA ligase, found in Burkholderia cenocepacia (strain ATCC BAA-245 / DSM 16553 / LMG 16656 / NCTC 13227 / J2315 / CF5610) (Burkholderia cepacia (strain J2315)).